The primary structure comprises 343 residues: Dihydroorotase (343 aa).

His14 and His16 together coordinate Zn(2+). Substrate is bound by residues His16–Arg18 and Asn42. The Zn(2+) site is built by Lys99, His136, and His174. Residue Lys99 is modified to N6-carboxylysine. His136 serves as a coordination point for substrate. Leu219 contributes to the substrate binding site. A Zn(2+)-binding site is contributed by Asp247. Asp247 is a catalytic residue. Residues His251 and Ala263 each coordinate substrate.

It belongs to the metallo-dependent hydrolases superfamily. DHOase family. Class II DHOase subfamily. Homodimer. Zn(2+) is required as a cofactor.

It carries out the reaction (S)-dihydroorotate + H2O = N-carbamoyl-L-aspartate + H(+). The protein operates within pyrimidine metabolism; UMP biosynthesis via de novo pathway; (S)-dihydroorotate from bicarbonate: step 3/3. Catalyzes the reversible cyclization of carbamoyl aspartate to dihydroorotate. This is Dihydroorotase from Psychromonas ingrahamii (strain DSM 17664 / CCUG 51855 / 37).